A 169-amino-acid polypeptide reads, in one-letter code: Shikimate kinase (169 aa).

Residue 12-17 coordinates ATP; it reads GCGKST. S16 is a binding site for Mg(2+). Residues D34, R57, and G79 each contribute to the substrate site. ATP is bound at residue R116. Residue R133 coordinates substrate.

Belongs to the shikimate kinase family. In terms of assembly, monomer. Mg(2+) is required as a cofactor.

The protein localises to the cytoplasm. It catalyses the reaction shikimate + ATP = 3-phosphoshikimate + ADP + H(+). It participates in metabolic intermediate biosynthesis; chorismate biosynthesis; chorismate from D-erythrose 4-phosphate and phosphoenolpyruvate: step 5/7. Catalyzes the specific phosphorylation of the 3-hydroxyl group of shikimic acid using ATP as a cosubstrate. In Clostridium beijerinckii (strain ATCC 51743 / NCIMB 8052) (Clostridium acetobutylicum), this protein is Shikimate kinase.